We begin with the raw amino-acid sequence, 160 residues long: uncharacterized protein (160 aa).

In terms of domain architecture, N-acetyltransferase spans isoleucine 5–leucine 160.

This is an uncharacterized protein from Bacillus subtilis (strain 168).